Here is a 73-residue protein sequence, read N- to C-terminus: Ocellatin-PT8 (73 aa).

Residues M1–C22 form the signal peptide. Positions D23 to E39 are excised as a propeptide.

Expressed by the skin glands.

It localises to the secreted. Its function is as follows. Has antibacterial activity against Gram-negative bacteria E.coli ATCC 25922 (MIC=60 uM), K.pneumoniae ATCC 700603 (MIC=240 uM) and S.choleraesuis ATCC 14028 (MIC=240 uM) and against Gram-positive bacterium S.aureus ATCC 29313 (MIC=240 uM). Shows no hemolytic activity and no cytotoxicity. The sequence is that of Ocellatin-PT8 from Leptodactylus pustulatus (Ceara white-lipped frog).